Here is a 123-residue protein sequence, read N- to C-terminus: Putative membrane protein insertion efficiency factor (123 aa).

The disordered stretch occupies residues Met1–Asp23.

It belongs to the UPF0161 family.

It localises to the cell inner membrane. Functionally, could be involved in insertion of integral membrane proteins into the membrane. The chain is Putative membrane protein insertion efficiency factor from Brucella abortus (strain 2308).